The sequence spans 521 residues: CD166 antigen (521 aa).

Residues 1 to 465 (GSPVFIAFRS…NREQVNHRAT (465 aa)) are Extracellular-facing. 7 N-linked (GlcNAc...) asparagine glycosylation sites follow: asparagine 33, asparagine 105, asparagine 244, asparagine 299, asparagine 395, asparagine 418, and asparagine 437. Residues 63–172 (PTIVKVFKQP…YGPSGQKTVQ (110 aa)) form the Ig-like V-type 2 domain. 4 disulfide bridges follow: cysteine 95–cysteine 158, cysteine 208–cysteine 251, cysteine 292–cysteine 330, and cysteine 373–cysteine 423. 3 consecutive Ig-like C2-type domains span residues 183–266 (PTEQ…TAIT), 271–347 (DLSL…ESLT), and 354–439 (PQIK…LNVS). The chain crosses the membrane as a helical span at residues 466–487 (LIVGIVLRLLHGALVAGVVYWL). Residues 488-521 (YVKKSKTASKHVNKDLGNLEENKKLEQNNHRTEA) lie on the Cytoplasmic side of the membrane. A disordered region spans residues 500–521 (NKDLGNLEENKKLEQNNHRTEA). Residues 507–521 (EENKKLEQNNHRTEA) show a composition bias toward basic and acidic residues.

Homodimer. Interacts (via extracellular domain) with CD6 (via extracellular domain). Homodimerization and interaction with CD6 involve the same region and cannot occur simultaneously. The affinity for CD6 is much higher than the affinity for self-association. Interacts (via glycosylated extracellular domain) with LGALS1 and LGALS3. Interaction with LGALS1 or LGALS3 inhibits interaction with CD6. In terms of processing, glycosylated.

The protein resides in the cell membrane. It is found in the cell projection. The protein localises to the axon. Its subcellular location is the dendrite. Functionally, cell adhesion molecule that mediates both heterotypic cell-cell contacts via its interaction with CD6, as well as homotypic cell-cell contacts. Promotes T-cell activation and proliferation via its interactions with CD6. Contributes to the formation and maturation of the immunological synapse via its interactions with CD6. Mediates homotypic interactions with cells that express ALCAM. Mediates attachment of dendritic cells onto endothelial cells via homotypic interaction. Inhibits endothelial cell migration and promotes endothelial tube formation via homotypic interactions. Required for normal organization of the lymph vessel network. Required for normal hematopoietic stem cell engraftment in the bone marrow. Plays a role in hematopoiesis; required for normal numbers of hematopoietic stem cells in bone marrow. Promotes in vitro osteoblast proliferation and differentiation. Promotes neurite extension, axon growth and axon guidance; axons grow preferentially on surfaces that contain ALCAM. Mediates outgrowth and pathfinding for retinal ganglion cell axons. The polypeptide is CD166 antigen (ALCAM) (Canis lupus familiaris (Dog)).